The chain runs to 463 residues: Type II NADH:quinone oxidoreductase Ndh (463 aa).

Residues 21–25 (GSGFG) and Val-89 contribute to the FAD site. Glu-184 is an active-site residue. FAD is bound by residues Asp-322 and 333–334 (AQ). A helical membrane pass occupies residues 387-407 (FSGFIAWLIWLVLHLAYLIGF).

It belongs to the NADH dehydrogenase family. FAD serves as cofactor.

It is found in the cell inner membrane. It carries out the reaction a quinone + NADH + H(+) = a quinol + NAD(+). The catalysed reaction is a menaquinone + NADH + H(+) = a menaquinol + NAD(+). The enzyme catalyses a ubiquinone + NADH + H(+) = a ubiquinol + NAD(+). Its activity is regulated as follows. Inhibited by phenothiazine analogs. Inhibited by 2-mercapto-quinazolinones. Not inhibited by classic inhibitors of type I NADH dehydrogenase, such as rotenone, piericidin A and pyridaben. Alternative, nonproton pumping NADH:quinone oxidoreductase that delivers electrons to the respiratory chain by oxidation of NADH and reduction of quinones. Ndh is probably the main NADH dehydrogenase of M.tuberculosis. The protein is Type II NADH:quinone oxidoreductase Ndh of Mycobacterium tuberculosis (strain ATCC 25618 / H37Rv).